We begin with the raw amino-acid sequence, 295 residues long: Protease HtpX (295 aa).

2 consecutive transmembrane segments (helical) span residues I4–L24 and Q42–S62. H147 contacts Zn(2+). The active site involves E148. H151 lines the Zn(2+) pocket. 2 consecutive transmembrane segments (helical) span residues V158 to I178 and I199 to F219. E224 is a binding site for Zn(2+).

It belongs to the peptidase M48B family. Zn(2+) is required as a cofactor.

Its subcellular location is the cell inner membrane. This is Protease HtpX from Pseudomonas syringae pv. tomato (strain ATCC BAA-871 / DC3000).